A 931-amino-acid polypeptide reads, in one-letter code: Netrin receptor UNC5C (931 aa).

The first 40 residues, 1–40 (MRKGLRATAARCGLGLGYLLQMLVLPALALLSASGTGSAA), serve as a signal peptide directing secretion. The Extracellular segment spans residues 41–380 (QDDDFFHELP…APDSDDVALY (340 aa)). The region spanning 62–159 (PHFLIEPEEA…AGTTKSRKAY (98 aa)) is the Ig-like domain. Intrachain disulfides connect Cys-83/Cys-144, Cys-95/Cys-142, Cys-188/Cys-239, Cys-272/Cys-309, Cys-276/Cys-313, Cys-287/Cys-299, Cys-328/Cys-362, Cys-332/Cys-367, and Cys-340/Cys-352. One can recognise an Ig-like C2-type domain in the interval 161 to 256 (RIAYLRKTFE…KRKSTTATVI (96 aa)). Asn-236 carries N-linked (GlcNAc...) asparagine glycosylation. 2 consecutive TSP type-1 domains span residues 260–314 (NGGW…TLCP) and 316–368 (DGRW…GLCM). Asn-361 carries an N-linked (GlcNAc...) asparagine glycan. The chain crosses the membrane as a helical span at residues 381–401 (VGIVIAVIVCLAISVVVALFV). At 402 to 931 (YRKNHRDFES…VVSLAAEGQY (530 aa)) the chain is on the cytoplasmic side. Residues 402-931 (YRKNHRDFES…VVSLAAEGQY (530 aa)) form a required for netrin-mediated axon repulsion of neuronal growth cones region. At Ser-502 the chain carries Phosphoserine. In terms of domain architecture, ZU5 spans 530-673 (CTAFGSFNSL…LSTYALVGHS (144 aa)). Tyr-568 bears the Phosphotyrosine mark. The interval 694–712 (SLEYSIRVYCLDDTQDALK) is interaction with DCC. One can recognise a Death domain in the interval 850–929 (QKLCSSLDAP…ETVVSLAAEG (80 aa)).

Belongs to the unc-5 family. In terms of assembly, interacts with DCC (via cytoplasmic domain). Interacts (tyrosine phosphorylated form) with PTPN11. Interacts (via extracellular domain) with FLRT3 (via extracellular domain). Interacts (via Ig-like C2-type domain) with DSCAM (via extracellular domain). Interacts (via death domain) with DAPK1. Interacts (via cytoplasmic domain) with TUBB3; this interaction is decreased by NTN1/Netrin-1. Post-translationally, proteolytically cleaved by caspases during apoptosis. The cleavage does not take place when the receptor is associated with netrin ligand. Its cleavage by caspases is required to induce apoptosis. Phosphorylated on different cytoplasmic tyrosine residues. Phosphorylation of Tyr-568 leads to an interaction with PTPN11 phosphatase, suggesting that its activity is regulated by phosphorylation/dephosphorylation. Tyrosine phosphorylation is netrin-dependent. As to expression, mainly expressed in brain. Expressed in temporal lobe cortical neurons and in neurons of the hippocampal pyramidal layer. Also expressed in kidney. Not expressed in developing or adult lung.

Its subcellular location is the cell membrane. It is found in the cell surface. It localises to the synapse. The protein resides in the synaptosome. The protein localises to the cell projection. Its subcellular location is the axon. It is found in the dendrite. It localises to the growth cone. The protein resides in the lamellipodium. The protein localises to the filopodium. Its function is as follows. Receptor for netrin required for axon guidance. Mediates axon repulsion of neuronal growth cones in the developing nervous system upon ligand binding. NTN1/Netrin-1 binding might cause dissociation of UNC5C from polymerized TUBB3 in microtubules and thereby lead to increased microtubule dynamics and axon repulsion. Axon repulsion in growth cones may also be caused by its association with DCC that may trigger signaling for repulsion. Might also collaborate with DSCAM in NTN1-mediated axon repulsion independently of DCC. Also involved in corticospinal tract axon guidance independently of DCC. Involved in dorsal root ganglion axon projection towards the spinal cord. It also acts as a dependence receptor required for apoptosis induction when not associated with netrin ligand. The protein is Netrin receptor UNC5C (UNC5C) of Homo sapiens (Human).